A 509-amino-acid chain; its full sequence is Activin receptor type-1 (509 aa).

The first 20 residues, Met-1–Ser-20, serve as a signal peptide directing secretion. The Extracellular segment spans residues Met-21 to Glu-123. N-linked (GlcNAc...) asparagine glycosylation is present at Asn-102. Residues Val-124–Leu-146 traverse the membrane as a helical segment. At Arg-147–Cys-509 the chain is on the cytoplasmic side. A GS domain is found at Ser-178–Gln-207. The region spanning Ile-208–Leu-502 is the Protein kinase domain. ATP is bound by residues Val-214 to Val-222 and Lys-235. Asp-336 (proton acceptor) is an active-site residue. Ser-501 carries the phosphoserine modification.

The protein belongs to the protein kinase superfamily. TKL Ser/Thr protein kinase family. TGFB receptor subfamily. Interacts with FKBP1A. Interacts with FCHO1. Interacts with CLU. Interacts with type II receptors AMHR2 and ACVR2A. Interacts with BMP7. Interacts with GDF2/BMP9. Interacts with BMP6 (when glycosylated); the interaction may induce HAMP expression. Interacts with TSC22D1/TSC-22. Requires Mg(2+) as cofactor. The cofactor is Mn(2+). As to expression, expressed in normal parenchymal cells, endothelial cells, fibroblasts and tumor-derived epithelial cells.

Its subcellular location is the membrane. It catalyses the reaction L-threonyl-[receptor-protein] + ATP = O-phospho-L-threonyl-[receptor-protein] + ADP + H(+). The enzyme catalyses L-seryl-[receptor-protein] + ATP = O-phospho-L-seryl-[receptor-protein] + ADP + H(+). In terms of biological role, bone morphogenetic protein (BMP) type I receptor that is involved in a wide variety of biological processes, including bone, heart, cartilage, nervous, and reproductive system development and regulation. As a type I receptor, forms heterotetrameric receptor complexes with the type II receptors AMHR2, ACVR2A or ACVR2B. Upon binding of ligands such as BMP7 or GDF2/BMP9 to the heteromeric complexes, type II receptors transphosphorylate ACVR1 intracellular domain. In turn, ACVR1 kinase domain is activated and subsequently phosphorylates SMAD1/5/8 proteins that transduce the signal. In addition to its role in mediating BMP pathway-specific signaling, suppresses TGFbeta/activin pathway signaling by interfering with the binding of activin to its type II receptor. Besides canonical SMAD signaling, can activate non-canonical pathways such as p38 mitogen-activated protein kinases/MAPKs. May promote the expression of HAMP, potentially via its interaction with BMP6. This is Activin receptor type-1 (ACVR1) from Homo sapiens (Human).